The chain runs to 89 residues: Large ribosomal subunit protein bL27 (89 aa).

Residues 1 to 24 form a disordered region; it reads MAHKKGTGSTRNGRDSNSKRLGVK.

It belongs to the bacterial ribosomal protein bL27 family.

The chain is Large ribosomal subunit protein bL27 from Synechococcus sp. (strain WH7803).